We begin with the raw amino-acid sequence, 216 residues long: Chaperone protein TorD (216 aa).

Belongs to the TorD/DmsD family. TorD subfamily.

It localises to the cytoplasm. Its function is as follows. Involved in the biogenesis of TorA. Acts on TorA before the insertion of the molybdenum cofactor and, as a result, probably favors a conformation of the apoenzyme that is competent for acquiring the cofactor. The sequence is that of Chaperone protein TorD from Ferrimonas balearica (strain DSM 9799 / CCM 4581 / KCTC 23876 / PAT).